The following is a 166-amino-acid chain: 2-amino-4-hydroxy-6-hydroxymethyldihydropteridine pyrophosphokinase (166 aa).

Belongs to the HPPK family.

It catalyses the reaction 6-hydroxymethyl-7,8-dihydropterin + ATP = (7,8-dihydropterin-6-yl)methyl diphosphate + AMP + H(+). The protein operates within cofactor biosynthesis; tetrahydrofolate biosynthesis; 2-amino-4-hydroxy-6-hydroxymethyl-7,8-dihydropteridine diphosphate from 7,8-dihydroneopterin triphosphate: step 4/4. Functionally, catalyzes the transfer of pyrophosphate from adenosine triphosphate (ATP) to 6-hydroxymethyl-7,8-dihydropterin, an enzymatic step in folate biosynthesis pathway. The protein is 2-amino-4-hydroxy-6-hydroxymethyldihydropteridine pyrophosphokinase (folK) of Streptococcus pyogenes serotype M6 (strain ATCC BAA-946 / MGAS10394).